The primary structure comprises 630 residues: A-type voltage-gated potassium channel KCND2 (630 aa).

Topologically, residues 1–184 are cytoplasmic; sequence MAAGVAAWLP…FENPHTSTMA (184 aa). The tract at residues 2–20 is interaction with KCNIP1, KCNIP2, and other family members; the sequence is AAGVAAWLPFARAAAIGWM. Thr-38 bears the Phosphothreonine mark. An interaction with KCNIP1 region spans residues 71 to 90; that stretch reads ERDFFYHPETQQYFFDRDPD. His-105, Cys-111, Cys-132, and Cys-133 together coordinate Zn(2+). The chain crosses the membrane as a helical span at residues 185-206; it reads LVFYYVTGFFIAVSVIANVVET. Residues 207–226 are Extracellular-facing; the sequence is VPCGSSPGHIKELPCGERYA. The helical transmembrane segment at 227-249 threads the bilayer; sequence VAFFCLDTACVMIFTVEYLLRLA. Topologically, residues 250–256 are cytoplasmic; sequence AAPSRYR. A helical transmembrane segment spans residues 257-281; it reads FVRSVMSIIDVVAILPYYIGLVMTD. The Extracellular portion of the chain corresponds to 282 to 287; the sequence is NEDVSG. Residues 288–307 form a helical; Voltage-sensor membrane-spanning segment; that stretch reads AFVTLRVFRVFRIFKFSRHS. Topologically, residues 308-321 are cytoplasmic; that stretch reads QGLRILGYTLKSCA. An S4-S5 linker region spans residues 308–321; it reads QGLRILGYTLKSCA. Residues 322-345 traverse the membrane as a helical segment; the sequence is SELGFLLFSLTMAIIIFATVMFYA. Topologically, residues 346-357 are extracellular; it reads EKGSSASKFTSI. The segment at residues 358-369 is an intramembrane region (helical); the sequence is PAAFWYTIVTMT. The K(+) site is built by Thr-370, Leu-371, Gly-372, and Tyr-373. The short motif at 370–375 is the Selectivity filter element; that stretch reads TLGYGD. The stretch at 370–377 is an intramembrane region; the sequence is TLGYGDMV. The Extracellular segment spans residues 378–380; it reads PKT. The helical transmembrane segment at 381–403 threads the bilayer; it reads IAGKIFGSICSLSGVLVIALPVP. The Cytoplasmic segment spans residues 404 to 630; sequence VIVSNFSRIY…GGNIVRVSAL (227 aa). Ser-438 bears the Phosphoserine mark. Residues 474–489 are required for dendritic targeting; that stretch reads FETQHHHLLHCLEKTT. The important for normal channel activation and inactivation, for interaction with KCNIP2, and probably other family members as well stretch occupies residues 474 to 630; the sequence is FETQHHHLLH…GGNIVRVSAL (157 aa). Residues Ser-548, Ser-552, Ser-572, and Ser-575 each carry the phosphoserine modification. The interval 600–623 is disordered; that stretch reads IPTPPVTTPEGDDRPESPEYSGGN. Residues Thr-602 and Thr-607 each carry the phosphothreonine modification. Ser-616 carries the phosphoserine modification. The PDZ-binding signature appears at 627–630; the sequence is VSAL.

Belongs to the potassium channel family. D (Shal) (TC 1.A.1.2) subfamily. Kv4.2/KCND2 sub-subfamily. As to quaternary structure, homotetramer or heterotetramer with KCND1 or KCND3. Associates with the regulatory subunits KCNIP1, KCNIP2, KCNIP3 and KCNIP4. Interacts with DPP6, DPP10, DLG4 and DLG1. In vivo, probably exists as heteromeric complex containing variable proportions of KCND1, KCND2, KCND3, KCNIP1, KCNIP2, KCNIP3, KCNIP4, DPP6 and DPP10. The tetrameric channel can associate with up to four regulatory subunits, such as KCNIP2 or KCNIP4. Interaction with KCNIP3 promotes tetramerization and formation of a functional potassium channel. Interaction with four KCNIP4 chains does not reduce interaction with DPP10. Probably part of a complex consisting of KCNIP1, KCNIP2 isoform 3 and KCND2. Interacts with FLNA and FLNC. Interacts with NCS1/FREQ. Identified in a complex with cAMP-dependent protein kinase (PKA), CAV3, AKAP6 and KCND3 in cardiac myocytes. Interacts (via S1 and S2 helices) with DPP6; this interaction stabilizes the conformation of the S1-S2 helices and facilitates S4 conformational change, including S4 sliding up and down, thereby accelerating activation, inactivation, and recovery. Phosphorylation at Ser-438 in response to MAPK activation is increased in stimulated dendrites. Interaction with KCNIP2 and DPP6 propomtes phosphorylation by PKA at Ser-552. Phosphorylation at Ser-552 has no effect on interaction with KCNIP3, but is required for the regulation of channel activity by KCNIP3. Phosphorylation at Ser-552 leads to KCND2 internalization. Phosphorylated by MAPK in response to signaling via the metabotropic glutamate receptor GRM5. Phosphorylation at Ser-616 is required for the down-regulation of neuronal A-type currents in response to signaling via GRM5. Detected in brain frontal cortex.

Its subcellular location is the cell membrane. It is found in the cell projection. The protein localises to the dendrite. It localises to the synapse. The protein resides in the perikaryon. Its subcellular location is the postsynaptic cell membrane. It is found in the dendritic spine. The protein localises to the sarcolemma. It localises to the cell junction. The protein resides in the membrane. Its subcellular location is the caveola. The enzyme catalyses K(+)(in) = K(+)(out). In terms of biological role, voltage-gated potassium channel that mediates transmembrane potassium transport in excitable membranes, primarily in the brain. Mediates the major part of the dendritic A-type current I(SA) in brain neurons. This current is activated at membrane potentials that are below the threshold for action potentials. It regulates neuronal excitability, prolongs the latency before the first spike in a series of action potentials, regulates the frequency of repetitive action potential firing, shortens the duration of action potentials and regulates the back-propagation of action potentials from the neuronal cell body to the dendrites. Contributes to the regulation of the circadian rhythm of action potential firing in suprachiasmatic nucleus neurons, which regulates the circadian rhythm of locomotor activity. Functions downstream of the metabotropic glutamate receptor GRM5 and plays a role in neuronal excitability and in nociception mediated by activation of GRM5. Mediates the transient outward current I(to) in rodent heart left ventricle apex cells, but not in human heart, where this current is mediated by another family member. Forms tetrameric potassium-selective channels through which potassium ions pass in accordance with their electrochemical gradient. The channel alternates between opened and closed conformations in response to the voltage difference across the membrane. Can form functional homotetrameric channels and heterotetrameric channels that contain variable proportions of KCND2 and KCND3; channel properties depend on the type of pore-forming alpha subunits that are part of the channel. In vivo, membranes probably contain a mixture of heteromeric potassium channel complexes. Interaction with specific isoforms of the regulatory subunits KCNIP1, KCNIP2, KCNIP3 or KCNIP4 strongly increases expression at the cell surface and thereby increases channel activity; it modulates the kinetics of channel activation and inactivation, shifts the threshold for channel activation to more negative voltage values, shifts the threshold for inactivation to less negative voltages and accelerates recovery after inactivation. Likewise, interaction with DPP6 or DPP10 promotes expression at the cell membrane and regulates both channel characteristics and activity. Upon depolarization, the channel goes from a resting closed state (C state) to an activated but non-conducting state (C* state), from there, the channel may either inactivate (I state) or open (O state). The chain is A-type voltage-gated potassium channel KCND2 from Oryctolagus cuniculus (Rabbit).